The following is a 526-amino-acid chain: Na(+)/H(+) antiporter NhaB (526 aa).

The next 10 helical transmembrane spans lie at 13-33 (FLGQ…VVNP), 98-118 (LLLI…LFVF), 133-155 (LAFC…VAVV), 208-228 (LLMH…VGEP), 244-264 (FFLR…LVCL), 309-329 (ALIG…VGLI), 355-375 (EALP…VIIE), 395-415 (LALF…VFVG), 452-472 (VATP…LAPL), and 481-501 (VWMA…CVQF).

It belongs to the NhaB Na(+)/H(+) (TC 2.A.34) antiporter family.

It localises to the cell inner membrane. It catalyses the reaction 2 Na(+)(in) + 3 H(+)(out) = 2 Na(+)(out) + 3 H(+)(in). In terms of biological role, na(+)/H(+) antiporter that extrudes sodium in exchange for external protons. In Serratia proteamaculans (strain 568), this protein is Na(+)/H(+) antiporter NhaB.